The following is a 242-amino-acid chain: tRNA (guanine-N(1)-)-methyltransferase (242 aa).

Residues Gly-111 and 130–135 each bind S-adenosyl-L-methionine; that span reads IGDYVL.

The protein belongs to the RNA methyltransferase TrmD family. Homodimer.

Its subcellular location is the cytoplasm. The enzyme catalyses guanosine(37) in tRNA + S-adenosyl-L-methionine = N(1)-methylguanosine(37) in tRNA + S-adenosyl-L-homocysteine + H(+). Specifically methylates guanosine-37 in various tRNAs. This chain is tRNA (guanine-N(1)-)-methyltransferase, found in Aster yellows witches'-broom phytoplasma (strain AYWB).